A 64-amino-acid polypeptide reads, in one-letter code: Alpha-conotoxin Lt14.1 (64 aa).

An N-terminal signal peptide occupies residues 1–20; the sequence is MKLSVMFIVFLMLTMPMTCA. Residues 21-50 constitute a propeptide that is removed on maturation; sequence GISRSATNGGEADVRAHDKAANLMALLQER. 2 disulfides stabilise this stretch: Cys52/Cys60 and Cys56/Cys63. Cys63 carries the cysteine amide modification.

Belongs to the conotoxin L superfamily. In terms of processing, may contain a 4-hydroxyproline. Expressed by the venom duct.

Its subcellular location is the secreted. Functionally, alpha-conotoxins act on postsynaptic membranes, they bind to the nicotinic acetylcholine receptors (nAChR) and thus inhibit them. This synthetic peptide displays analgesic activity in a hot plate assay. Analgesia is also observed against second phase pain in formalin-induced inflammatory pain model, and in a rat model of mechanically-induced pain. Effects downstream of nAChR are inhibition of calcium influx, inhibition of ERK1/2 phosphorylation and inhibition of c-fos/NOS expression. Genes associated with drug dependence are not up-regulated by this toxin. Treatment with this toxin reversed morphine withdrawal symptoms in mice. This is Alpha-conotoxin Lt14.1 from Conus litteratus (Lettered cone).